The following is a 262-amino-acid chain: Small ribosomal subunit protein eS4C (262 aa).

An S4 RNA-binding domain is found at 42–105; the sequence is LPLIVFLRNR…GEHFRLVYDI (64 aa). Position 194 is a phosphothreonine (Thr194).

Belongs to the eukaryotic ribosomal protein eS4 family. As to quaternary structure, component of the small ribosomal subunit (SSU). Mature yeast ribosomes consist of a small (40S) and a large (60S) subunit. The 40S small subunit contains 1 molecule of ribosomal RNA (18S rRNA) and at least 33 different proteins. The large 60S subunit contains 3 rRNA molecules (25S, 5.8S and 5S rRNA) and at least 46 different proteins.

Its subcellular location is the cytoplasm. Component of the ribosome, a large ribonucleoprotein complex responsible for the synthesis of proteins in the cell. The small ribosomal subunit (SSU) binds messenger RNAs (mRNAs) and translates the encoded message by selecting cognate aminoacyl-transfer RNA (tRNA) molecules. The large subunit (LSU) contains the ribosomal catalytic site termed the peptidyl transferase center (PTC), which catalyzes the formation of peptide bonds, thereby polymerizing the amino acids delivered by tRNAs into a polypeptide chain. The nascent polypeptides leave the ribosome through a tunnel in the LSU and interact with protein factors that function in enzymatic processing, targeting, and the membrane insertion of nascent chains at the exit of the ribosomal tunnel. This is Small ribosomal subunit protein eS4C (rps403) from Schizosaccharomyces pombe (strain 972 / ATCC 24843) (Fission yeast).